Consider the following 461-residue polypeptide: Ribulose bisphosphate carboxylase (461 aa).

Asn112 contributes to the substrate binding site. Lys167 functions as the Proton acceptor in the catalytic mechanism. Position 169 (Lys169) interacts with substrate. Mg(2+) contacts are provided by Lys192, Asp194, and Glu195. Position 192 is an N6-carboxylysine (Lys192). The Proton acceptor role is filled by His288. Residues Arg289, His322, and Ser369 each coordinate substrate.

The protein belongs to the RuBisCO large chain family. Type II subfamily. In terms of assembly, homodimer. Mg(2+) is required as a cofactor.

It catalyses the reaction 2 (2R)-3-phosphoglycerate + 2 H(+) = D-ribulose 1,5-bisphosphate + CO2 + H2O. The catalysed reaction is D-ribulose 1,5-bisphosphate + O2 = 2-phosphoglycolate + (2R)-3-phosphoglycerate + 2 H(+). In terms of biological role, ruBisCO catalyzes two reactions: the carboxylation of D-ribulose 1,5-bisphosphate, the primary event in carbon dioxide fixation, as well as the oxidative fragmentation of the pentose substrate. Both reactions occur simultaneously and in competition at the same active site. The protein is Ribulose bisphosphate carboxylase of Rhodopseudomonas palustris (strain BisB5).